A 186-amino-acid chain; its full sequence is GTP cyclohydrolase 1 2 (186 aa).

It belongs to the GTP cyclohydrolase I family. In terms of assembly, homomer.

It carries out the reaction GTP + H2O = 7,8-dihydroneopterin 3'-triphosphate + formate + H(+). It functions in the pathway cofactor biosynthesis; 7,8-dihydroneopterin triphosphate biosynthesis; 7,8-dihydroneopterin triphosphate from GTP: step 1/1. This Pseudomonas putida (strain ATCC 47054 / DSM 6125 / CFBP 8728 / NCIMB 11950 / KT2440) protein is GTP cyclohydrolase 1 2.